Consider the following 565-residue polypeptide: Calcium-dependent protein kinase 21 (565 aa).

A lipid anchor (N-myristoyl glycine) is attached at glycine 2. The interval 28–55 (PVPDAEAASPRKDGVDGDGDDVRGGGGG) is disordered. Residues 36–50 (SPRKDGVDGDGDDVR) show a composition bias toward basic and acidic residues. Residues 77 to 358 (YVLGKELGRG…AKQVLEHPWL (282 aa)) enclose the Protein kinase domain. Residues 83–91 (LGRGEFGVT) and lysine 106 contribute to the ATP site. The active-site Proton acceptor is aspartate 224. Positions 364 to 394 (APNVSLGDAVRARLQQFSAMNKFKKKALGVV) are autoinhibitory domain. EF-hand domains are found at residues 401 to 436 (EEVD…NGQP), 437 to 472 (VPEP…LKKM), 473 to 500 (SNDE…ELRE), and 504 to 539 (PNEQ…GADW). The Ca(2+) site is built by aspartate 414, aspartate 416, asparagine 418, histidine 420, glutamate 425, aspartate 450, aspartate 452, asparagine 454, threonine 456, glutamate 461, aspartate 486, aspartate 488, serine 490, glutamate 497, aspartate 517, aspartate 519, aspartate 521, arginine 523, and glutamate 528.

It belongs to the protein kinase superfamily. Ser/Thr protein kinase family. CDPK subfamily. As to expression, expressed in spikelets and developing seeds.

It is found in the membrane. The catalysed reaction is L-seryl-[protein] + ATP = O-phospho-L-seryl-[protein] + ADP + H(+). It carries out the reaction L-threonyl-[protein] + ATP = O-phospho-L-threonyl-[protein] + ADP + H(+). Activated by calcium. Autophosphorylation may play an important role in the regulation of the kinase activity. May play a role in signal transduction pathways that involve calcium as a second messenger. Functions in signal transduction pathways that positively regulate responses to abscisic acid (ABA) and salt stress. This Oryza sativa subsp. japonica (Rice) protein is Calcium-dependent protein kinase 21.